The sequence spans 437 residues: Alpha-galactosidase 3 (437 aa).

The signal sequence occupies residues 1-30 (MVIMKKMKDSVLFLVVGLFSLSVLVSQSIA). 2 disulfides stabilise this stretch: Cys-85–Cys-117 and Cys-165–Cys-195. The N-linked (GlcNAc...) asparagine glycan is linked to Asn-88. Residues 115 to 116 (DD) and Lys-191 each bind substrate. Asp-193 acts as the Nucleophile in catalysis. Asn-214 is a glycosylation site (N-linked (GlcNAc...) asparagine). Residues 226–230 (EWGVD), Arg-244, and Asp-248 contribute to the substrate site. Residue Asp-248 is the Proton donor of the active site. Residues Asn-250, Asn-315, and Asn-408 are each glycosylated (N-linked (GlcNAc...) asparagine).

This sequence belongs to the glycosyl hydrolase 27 family. As to quaternary structure, homodimer.

Its subcellular location is the secreted. It is found in the cell wall. The protein localises to the extracellular space. It localises to the apoplast. The protein resides in the vacuole. The catalysed reaction is Hydrolysis of terminal, non-reducing alpha-D-galactose residues in alpha-D-galactosides, including galactose oligosaccharides, galactomannans and galactolipids.. In terms of biological role, may regulate leaf (and possibly other organ) development by functioning in cell wall loosening and cell wall expansion. This is Alpha-galactosidase 3 from Arabidopsis thaliana (Mouse-ear cress).